A 359-amino-acid polypeptide reads, in one-letter code: uncharacterized protein (359 aa).

This is an uncharacterized protein from Treponema pallidum (strain Nichols).